The following is a 184-amino-acid chain: Large ribosomal subunit protein uL22 (184 aa).

Belongs to the universal ribosomal protein uL22 family. As to quaternary structure, part of the 50S ribosomal subunit.

This protein binds specifically to 23S rRNA. It makes multiple contacts with different domains of the 23S rRNA in the assembled 50S subunit and ribosome. Its function is as follows. The globular domain of the protein is located near the polypeptide exit tunnel on the outside of the subunit, while an extended beta-hairpin is found that lines the wall of the exit tunnel in the center of the 70S ribosome. The polypeptide is Large ribosomal subunit protein uL22 (Pyrobaculum calidifontis (strain DSM 21063 / JCM 11548 / VA1)).